We begin with the raw amino-acid sequence, 119 residues long: Beta-2-microglobulin (119 aa).

An N-terminal signal peptide occupies residues 1–20 (MARSVVAALLVLLSLSGLEA). Positions 25–114 (PKIQVYSRHP…VTFPTPKTVK (90 aa)) constitute an Ig-like C1-type domain. C45 and C100 are oxidised to a cystine.

The protein belongs to the beta-2-microglobulin family. In terms of assembly, heterodimer of an alpha chain and a beta chain. Beta-2-microglobulin is the beta-chain of major histocompatibility complex class I molecules.

It is found in the secreted. In terms of biological role, component of the class I major histocompatibility complex (MHC). Involved in the presentation of peptide antigens to the immune system. This chain is Beta-2-microglobulin (B2M), found in Saimiri boliviensis boliviensis (Bolivian squirrel monkey).